The following is a 462-amino-acid chain: CUGBP Elav-like family member 3-B (462 aa).

3 RRM domains span residues 7–88 (IKLF…PADS), 95–175 (RKLF…FADT), and 377–455 (CNIF…LKRP).

This sequence belongs to the CELF/BRUNOL family.

The protein resides in the nucleus. It is found in the cytoplasm. In terms of biological role, RNA-binding protein that may be involved in the regulation of pre-mRNA alternative splicing. The polypeptide is CUGBP Elav-like family member 3-B (tnrc4-b) (Xenopus laevis (African clawed frog)).